Here is a 100-residue protein sequence, read N- to C-terminus: Putative protein BCL8 (100 aa).

Expressed in prostate and testis.

The protein is Putative protein BCL8 (NBEAP1) of Homo sapiens (Human).